Consider the following 242-residue polypeptide: Purine nucleoside phosphorylase PA4543 (242 aa).

Zn(2+) contacts are provided by H69, C103, and H120.

It belongs to the purine nucleoside phosphorylase YfiH/LACC1 family. As to quaternary structure, homodimer. Cu(2+) is required as a cofactor. The cofactor is Zn(2+).

It carries out the reaction adenosine + phosphate = alpha-D-ribose 1-phosphate + adenine. The catalysed reaction is S-methyl-5'-thioadenosine + phosphate = 5-(methylsulfanyl)-alpha-D-ribose 1-phosphate + adenine. The enzyme catalyses inosine + phosphate = alpha-D-ribose 1-phosphate + hypoxanthine. It catalyses the reaction adenosine + H2O + H(+) = inosine + NH4(+). Functionally, purine nucleoside enzyme that catalyzes the phosphorolysis of adenosine and inosine nucleosides, yielding D-ribose 1-phosphate and the respective free bases, adenine and hypoxanthine. Also catalyzes the phosphorolysis of S-methyl-5'-thioadenosine into adenine and S-methyl-5-thio-alpha-D-ribose 1-phosphate. Also has adenosine deaminase activity. This chain is Purine nucleoside phosphorylase PA4543, found in Pseudomonas aeruginosa (strain ATCC 15692 / DSM 22644 / CIP 104116 / JCM 14847 / LMG 12228 / 1C / PRS 101 / PAO1).